A 123-amino-acid chain; its full sequence is uncharacterized protein (123 aa).

A helical membrane pass occupies residues G5–Y25.

It belongs to the asfivirus CP123L family.

It is found in the host membrane. It localises to the virion. This is an uncharacterized protein from Ornithodoros (relapsing fever ticks).